Here is a 152-residue protein sequence, read N- to C-terminus: Large ribosomal subunit protein uL15 (152 aa).

A disordered region spans residues 1-57; that stretch reads MTSTLNTLKSNSGSRKKKLRKGRGIAAGQGASCGFGMRGQKSRSGRPTRPGFEGGQM. Positions 14–23 are enriched in basic residues; sequence SRKKKLRKGR. Gly residues predominate over residues 25 to 37; that stretch reads IAAGQGASCGFGM.

Belongs to the universal ribosomal protein uL15 family. In terms of assembly, part of the 50S ribosomal subunit.

Its function is as follows. Binds to the 23S rRNA. The protein is Large ribosomal subunit protein uL15 of Prochlorococcus marinus (strain MIT 9312).